A 137-amino-acid chain; its full sequence is Probable 4-amino-4-deoxy-L-arabinose-phosphoundecaprenol flippase subunit ArnF (137 aa).

The Cytoplasmic segment spans residues 1-5 (MSRAR). Residues 6–26 (GFAFALGSVALVSGAQLGMRW) form a helical membrane-spanning segment. Over 27-49 (SMTRLPAPDQWLPALSAGSVDLA) the chain is Periplasmic. The chain crosses the membrane as a helical span at residues 50 to 70 (ALAVVAAAIAAYALSMLCWLL). The Cytoplasmic portion of the chain corresponds to 71-80 (ALRDLPLGRA). A helical membrane pass occupies residues 81 to 101 (YSLLSISYALVYLLAASLPLF). Residue asparagine 102 is a topological domain, periplasmic. A helical membrane pass occupies residues 103–123 (EPFTLSKTLGVALVILGVITI). The Cytoplasmic segment spans residues 124–137 (NSRSAPATSPRNTP).

This sequence belongs to the ArnF family. Heterodimer of ArnE and ArnF.

It localises to the cell inner membrane. Its pathway is bacterial outer membrane biogenesis; lipopolysaccharide biosynthesis. In terms of biological role, translocates 4-amino-4-deoxy-L-arabinose-phosphoundecaprenol (alpha-L-Ara4N-phosphoundecaprenol) from the cytoplasmic to the periplasmic side of the inner membrane. In Pseudomonas fluorescens (strain ATCC BAA-477 / NRRL B-23932 / Pf-5), this protein is Probable 4-amino-4-deoxy-L-arabinose-phosphoundecaprenol flippase subunit ArnF.